Consider the following 519-residue polypeptide: ATP synthase subunit alpha (519 aa).

175–182 serves as a coordination point for ATP; sequence GDRQTGKT.

Belongs to the ATPase alpha/beta chains family. As to quaternary structure, F-type ATPases have 2 components, CF(1) - the catalytic core - and CF(0) - the membrane proton channel. CF(1) has five subunits: alpha(3), beta(3), gamma(1), delta(1), epsilon(1). CF(0) has three main subunits: a(1), b(2) and c(9-12). The alpha and beta chains form an alternating ring which encloses part of the gamma chain. CF(1) is attached to CF(0) by a central stalk formed by the gamma and epsilon chains, while a peripheral stalk is formed by the delta and b chains.

It localises to the cell inner membrane. It catalyses the reaction ATP + H2O + 4 H(+)(in) = ADP + phosphate + 5 H(+)(out). Its function is as follows. Produces ATP from ADP in the presence of a proton gradient across the membrane. The alpha chain is a regulatory subunit. This is ATP synthase subunit alpha from Acinetobacter baylyi (strain ATCC 33305 / BD413 / ADP1).